The primary structure comprises 539 residues: Protein lin-14 (539 aa).

Disordered regions lie at residues 162–230 (PTLP…SNHS) and 262–293 (ETAP…PRKP). Composition is skewed to polar residues over residues 163 to 183 (TLPN…GTDD) and 193 to 214 (SVDS…NQNI). The span at 274–284 (NGTTNGTAKAG) shows a compositional bias: low complexity. Residues 296–440 (DDIVKIVRNQ…CRRVRHAKKT (145 aa)) are involved in sequence-specific DNA-binding.

Post-translationally, cleaved by caspase ced-3 in vitro. As to expression, high levels in hypodermal, intestinal, body wall muscle, nerve ring, and ventral nerve cord cells of embryos and L1 animals.

Its subcellular location is the nucleus. Its function is as follows. Heterochronic protein which controls the choice of stage specific cell fates. Involved in the temporal progression of vulval fate patterning, possibly by inhibiting lin-12. Acts as a transcription factor involved in the stage-specific repression of various genes, including insulin/insulin-like growth factor gene ins-33 and neuropeptide-encoding gene nlp-45. Binds to the consensus sequence 5'-[CT]GGA[AG]-3' in the regulatory elements of target genes. Plays a role in governing the developmental timing of male tail tip morphogenesis. Plays a role in controlling the timing of seam cell development during the larval stages. Plays a role in promoting survival at high temperatures in larvae. Involved in maintenance of the architecture of the ventral nerve cord, perhaps acting via modulating expression of the immunoglobulin domain gene zig-4. Functionally, may specify L2 and later cell fates, creating a temporal switch. May be involved in specifying L1 cell fates. The polypeptide is Protein lin-14 (Caenorhabditis elegans).